We begin with the raw amino-acid sequence, 165 residues long: LOB domain-containing protein 3 (165 aa).

The 103-residue stretch at serine 13–leucine 115 folds into the LOB domain.

Belongs to the LOB domain-containing protein family. Expressed in young shoots, roots, stems, leaves and flowers. At the bases of lateral organs formed from vegetative, inflorescence, and floral meristems.

It localises to the nucleus. The sequence is that of LOB domain-containing protein 3 (LBD3) from Arabidopsis thaliana (Mouse-ear cress).